A 166-amino-acid polypeptide reads, in one-letter code: Large ribosomal subunit protein uL10 (166 aa).

Belongs to the universal ribosomal protein uL10 family. As to quaternary structure, part of the ribosomal stalk of the 50S ribosomal subunit. The N-terminus interacts with L11 and the large rRNA to form the base of the stalk. The C-terminus forms an elongated spine to which L12 dimers bind in a sequential fashion forming a multimeric L10(L12)X complex.

Functionally, forms part of the ribosomal stalk, playing a central role in the interaction of the ribosome with GTP-bound translation factors. The polypeptide is Large ribosomal subunit protein uL10 (Streptococcus pneumoniae (strain 70585)).